The primary structure comprises 447 residues: MAAAAIGEANLAQFGRAQRVIPGGVNSPVRAFRSVGGTPRFMVFANGPYIVDAEGREYVDLVASWGPAILGHAHPAVVSAVQEAAARGLSFGASTPAETELAEAVIARVPFVEKLRLVSTGTEATMTAIRLARGFTGRPLLIKFAGHYHGHSDSLLAEAGSGLATLSLPGSAGVTEATAAQTLVLPYNDLGAVRAVFEANGPDIAAVIAEAAAANMGVVPPDEGFNAALTDLAHEYGALLILDEVLTGFRVSEAGFWGLDRGYTPDLVAFGKVIGGGMPLAAVGGRAELMDILAPAGPVYQAGTLSGNPVAVAAGLATLAHAGEAVYDRLDIVAGTLSAAVSDALTAEGVAHSVQRAGNLFSFVFGDVAAAPRTFAEVQRQEAFRYRAFFHAMLDAGVSLPPSVFEAWFVTAAHDDAAVGRVLEALPAAARAAASACPGRPLLFVRR.

Residue Lys-272 is modified to N6-(pyridoxal phosphate)lysine.

This sequence belongs to the class-III pyridoxal-phosphate-dependent aminotransferase family. HemL subfamily. As to quaternary structure, homodimer. It depends on pyridoxal 5'-phosphate as a cofactor.

The protein resides in the cytoplasm. It catalyses the reaction (S)-4-amino-5-oxopentanoate = 5-aminolevulinate. It participates in porphyrin-containing compound metabolism; protoporphyrin-IX biosynthesis; 5-aminolevulinate from L-glutamyl-tRNA(Glu): step 2/2. The polypeptide is Glutamate-1-semialdehyde 2,1-aminomutase (Leifsonia xyli subsp. xyli (strain CTCB07)).